A 293-amino-acid chain; its full sequence is 4-hydroxy-tetrahydrodipicolinate synthase (293 aa).

Threonine 47 lines the pyruvate pocket. Tyrosine 136 serves as the catalytic Proton donor/acceptor. The Schiff-base intermediate with substrate role is filled by lysine 164. Residue isoleucine 206 coordinates pyruvate.

The protein belongs to the DapA family. Homotetramer; dimer of dimers.

It is found in the cytoplasm. The enzyme catalyses L-aspartate 4-semialdehyde + pyruvate = (2S,4S)-4-hydroxy-2,3,4,5-tetrahydrodipicolinate + H2O + H(+). The protein operates within amino-acid biosynthesis; L-lysine biosynthesis via DAP pathway; (S)-tetrahydrodipicolinate from L-aspartate: step 3/4. Catalyzes the condensation of (S)-aspartate-beta-semialdehyde [(S)-ASA] and pyruvate to 4-hydroxy-tetrahydrodipicolinate (HTPA). This chain is 4-hydroxy-tetrahydrodipicolinate synthase, found in Listeria monocytogenes serovar 1/2a (strain ATCC BAA-679 / EGD-e).